A 358-amino-acid polypeptide reads, in one-letter code: Methylthioribose-1-phosphate isomerase (358 aa).

Residues 54–56, Arg96, and Gln205 contribute to the substrate site; that span reads RGA. Asp246 serves as the catalytic Proton donor. 256-257 lines the substrate pocket; that stretch reads NK.

It belongs to the eIF-2B alpha/beta/delta subunits family. MtnA subfamily.

The catalysed reaction is 5-(methylsulfanyl)-alpha-D-ribose 1-phosphate = 5-(methylsulfanyl)-D-ribulose 1-phosphate. The protein operates within amino-acid biosynthesis; L-methionine biosynthesis via salvage pathway; L-methionine from S-methyl-5-thio-alpha-D-ribose 1-phosphate: step 1/6. Its function is as follows. Catalyzes the interconversion of methylthioribose-1-phosphate (MTR-1-P) into methylthioribulose-1-phosphate (MTRu-1-P). This chain is Methylthioribose-1-phosphate isomerase, found in Pseudomonas paraeruginosa (strain DSM 24068 / PA7) (Pseudomonas aeruginosa (strain PA7)).